A 298-amino-acid chain; its full sequence is Ornithine carbamoyltransferase (298 aa).

Carbamoyl phosphate-binding positions include 50–53, Gln-77, Arg-101, and 128–131; these read STRT and HPCQ. Residues Asn-159, Asp-216, and 220–221 contribute to the L-ornithine site; that span reads SM. Carbamoyl phosphate is bound by residues 256–257 and Arg-284; that span reads CL.

It belongs to the aspartate/ornithine carbamoyltransferase superfamily. OTCase family.

Its subcellular location is the cytoplasm. The enzyme catalyses carbamoyl phosphate + L-ornithine = L-citrulline + phosphate + H(+). Its pathway is amino-acid biosynthesis; L-arginine biosynthesis; L-arginine from L-ornithine and carbamoyl phosphate: step 1/3. Its function is as follows. Reversibly catalyzes the transfer of the carbamoyl group from carbamoyl phosphate (CP) to the N(epsilon) atom of ornithine (ORN) to produce L-citrulline. The protein is Ornithine carbamoyltransferase of Methylococcus capsulatus (strain ATCC 33009 / NCIMB 11132 / Bath).